Consider the following 259-residue polypeptide: DNA-directed RNA polymerase 30 kDa polypeptide (259 aa).

The segment at 155–195 (YNTPCPNCKSRNTTPMMIQTRAADEPPLVRHACRDCKQHFK) adopts a TFIIS-type zinc-finger fold. Residues C159, C162, C187, and C190 each contribute to the Zn(2+) site. Positions 220–259 (EILPDNNPSPPESPEPASPIDDGLIRATFDRNDEPPEDDE) are disordered. Over residues 226-236 (NPSPPESPEPA) the composition is skewed to pro residues.

It belongs to the poxviridae DNA-directed RNA polymerase 30 kDa subunit family. In terms of assembly, the DNA-dependent RNA polymerase (vRNAP) consists of eight subunits encoded by early viral genes and termed according to their apparent molecular masses Rpo147, Rpo132, Rpo35, Rpo30, Rpo22, Rpo19, Rpo18, and Rpo7. The same holoenzyme, with the addition of the transcription-specificity factor RAP94, is used for early gene expression.

Its subcellular location is the virion. The protein resides in the host cytoplasm. The catalysed reaction is RNA(n) + a ribonucleoside 5'-triphosphate = RNA(n+1) + diphosphate. In terms of biological role, part of the DNA-dependent RNA polymerase which catalyzes the transcription of viral DNA into RNA using the four ribonucleoside triphosphates as substrates. Responsible for the transcription of early, intermediate and late genes. DNA-dependent RNA polymerase associates with the early transcription factor (ETF), itself composed of OPG118 and OPG134, thereby allowing the early genes transcription. Late transcription, and probably also intermediate transcription, require newly synthesized RNA polymerase. The protein is DNA-directed RNA polymerase 30 kDa polypeptide (OPG066) of Homo sapiens (Human).